We begin with the raw amino-acid sequence, 307 residues long: MQHEENEIVSKSELLVVTGMSGAGKSLVLQNLEDLGYFCVDNLPPILLPKFVELMEQGNPSLRKVAIAIDLRGQEFFKSLVKEVDLLRSQNRVIVDVMFVEASEAKLISRYKETRRAHPLNDNGQRSLIDAIEEERNSLTEIRSIANYVIDTTVLKPKELRAQINHLFNRNDIETFSISVTSFGFKHGIQQDADLVFDVRFLPNPFYVEALRPLTGVDDEVYQYVMKWQETAIFYDKLLDLLKFMIPGYKKEGKTQLVIAIGCTGGQHRSVALAKRLAEDLNESYDYNVYVHHRDAHIESGVENEKS.

19-26 provides a ligand contact to ATP; the sequence is GMSGAGKS. 70–73 lines the GTP pocket; that stretch reads DLRG.

Belongs to the RapZ-like family.

Displays ATPase and GTPase activities. The sequence is that of Nucleotide-binding protein Sca_0414 from Staphylococcus carnosus (strain TM300).